We begin with the raw amino-acid sequence, 335 residues long: 2-acylglycerol O-acyltransferase 1 (335 aa).

Transmembrane regions (helical) follow at residues 18-38 (TVAV…SIGI) and 40-60 (VMLI…WLYF). 2 N-linked (GlcNAc...) asparagine glycosylation sites follow: N121 and N125. Residues 132–152 (LFPGFTSYLHVLPLWFWCPVF) form a helical membrane-spanning segment. N180 carries N-linked (GlcNAc...) asparagine glycosylation.

The protein belongs to the diacylglycerol acyltransferase family. In terms of tissue distribution, expressed in stomach and liver.

The protein localises to the endoplasmic reticulum membrane. It carries out the reaction a 2-acylglycerol + an acyl-CoA = a 1,2-diacylglycerol + CoA. The enzyme catalyses 2-(9Z-octadecenoyl)-glycerol + butanoyl-CoA = 1-butanoyl-2-(9Z-octadecenoyl)-glycerol + CoA. It catalyses the reaction 2-(9Z-octadecenoyl)-glycerol + octanoyl-CoA = 1-octanoyl-2-(9Z-octadecenoyl)-glycerol + CoA. The catalysed reaction is 2-(9Z-octadecenoyl)-glycerol + dodecanoyl-CoA = 1-dodecanoyl-2-(9Z-octadecenoyl)-glycerol + CoA. It carries out the reaction 2-(9Z-octadecenoyl)-glycerol + tetradecanoyl-CoA = 1-tetradecanoyl-2-(9Z-octadecenoyl)-glycerol + CoA. The enzyme catalyses 2-(9Z-octadecenoyl)-glycerol + hexadecanoyl-CoA = 1-hexadecanoyl-2-(9Z-octadecenoyl)-glycerol + CoA. It catalyses the reaction 2-(9Z-octadecenoyl)-glycerol + octadecanoyl-CoA = 1-octadecanoyl-2-(9Z-octadecenoyl)-glycerol + CoA. The catalysed reaction is eicosanoyl-CoA + 2-(9Z-octadecenoyl)-glycerol = 1-eicosanoyl-2-(9Z-octadecenoyl)-glycerol + CoA. It carries out the reaction 2-(9Z-octadecenoyl)-glycerol + (9Z)-octadecenoyl-CoA = 1,2-di-(9Z-octadecenoyl)-glycerol + CoA. The enzyme catalyses 2-(9Z-octadecenoyl)-glycerol + (9Z,12Z)-octadecadienoyl-CoA = 1-(9Z,12Z-octadecadienoyl)-2-(9Z-octadecenoyl)-glycerol + CoA. It catalyses the reaction 2-(9Z-octadecenoyl)-glycerol + (5Z,8Z,11Z,14Z)-eicosatetraenoyl-CoA = 1-(5Z,8Z,11Z,14Z-eicosatetraenoyl)-2-(9Z-octadecenoyl)-glycerol + CoA. The catalysed reaction is a 2-acylglycerol + an acyl-CoA = a 1,2-diacyl-sn-glycerol + CoA. It carries out the reaction a 2-acylglycerol + an acyl-CoA = a 2,3-diacyl-sn-glycerol + CoA. The enzyme catalyses a 1-acylglycerol + an acyl-CoA = a 1,2-diacylglycerol + CoA. It catalyses the reaction 1-dodecanoylglycerol + (9Z)-octadecenoyl-CoA = 1-dodecanoyl-2-(9Z-octadecenoyl)-glycerol + CoA. The catalysed reaction is 1-tetradecanoylglycerol + (9Z)-octadecenoyl-CoA = 1-tetradecanoyl-2-(9Z-octadecenoyl)-glycerol + CoA. It carries out the reaction 1-hexadecanoylglycerol + (9Z)-octadecenoyl-CoA = 1-hexadecanoyl-2-(9Z-octadecenoyl)-glycerol + CoA. The enzyme catalyses 1-(9Z-octadecenoyl)-glycerol + (9Z)-octadecenoyl-CoA = 1,2-di-(9Z-octadecenoyl)-glycerol + CoA. It catalyses the reaction 1-(9Z,12Z-octadecadienoyl)-glycerol + (9Z)-octadecenoyl-CoA = 1-(9Z,12Z-octadecadienoyl)-2-(9Z-octadecenoyl)-glycerol + CoA. The catalysed reaction is 1-(9Z,12Z,15Z-octadecatrienoyl)-glycerol + (9Z)-octadecenoyl-CoA = 1-(9Z,12Z,15Z-octadecatrienoyl)-2-(9Z-octadecenoyl)-glycerol + CoA. It carries out the reaction 1-(5Z,8Z,11Z,14Z-eicosatetraenoyl)-glycerol + (9Z)-octadecenoyl-CoA = 1-(5Z,8Z,11Z,14Z-eicosatetraenoyl)-2-(9Z-octadecenoyl)-glycerol + CoA. The enzyme catalyses a 1-acylglycerol + an acyl-CoA = a 1,3-diacylglycerol + CoA. It catalyses the reaction 1-dodecanoylglycerol + (9Z)-octadecenoyl-CoA = 1-dodecanoyl-3-(9Z-octadecenoyl)-glycerol + CoA. The catalysed reaction is 1-hexadecanoylglycerol + (9Z)-octadecenoyl-CoA = 1-(9Z-octadecenoyl)-3-hexadecanoylglycerol + CoA. It carries out the reaction 1-octadecanoylglycerol + (9Z)-octadecenoyl-CoA = 1-octadecanoyl-3-(9Z-octadecenoyl)-glycerol + CoA. The enzyme catalyses 1-(9Z-octadecenoyl)-sn-glycerol + (9Z)-octadecenoyl-CoA = 1,3-di-(9Z-octadecenoyl)-glycerol + CoA. It catalyses the reaction 1-(9Z,12Z-octadecadienoyl)-glycerol + (9Z)-octadecenoyl-CoA = 1-(9Z-octadecenoyl)-3-(9Z,12Z-octadecadienoyl)-glycerol + CoA. The catalysed reaction is 1-(9Z,12Z,15Z-octadecatrienoyl)-glycerol + (9Z)-octadecenoyl-CoA = 1-(9Z,12Z,15Z-octadecatrienoyl)-3-(9Z-octadecenoyl)-glycerol + CoA. It carries out the reaction a 1-acyl-sn-glycerol + an acyl-CoA = a 1,3-diacyl-sn-glycerol + CoA. The enzyme catalyses a 3-acyl-sn-glycerol + an acyl-CoA = a 1,3-diacyl-sn-glycerol + CoA. It catalyses the reaction 3-octadecanoyl-sn-glycerol + (9Z)-octadecenoyl-CoA = 1-(9Z-octadecenoyl)-3-octadecanoyl-sn-glycerol + CoA. Its pathway is glycerolipid metabolism; triacylglycerol biosynthesis. Its function is as follows. Involved in glycerolipid synthesis and lipid metabolism. Catalyzes the formation of diacylglycerol, the precursor of triacylglycerol, by transferring the acyl chain of a fatty acyl-CoA to a monoacylglycerol, mainly at the sn-1 or sn-3 positions. It uses both sn-2-monoacylglycerol (2-acylglycerol) and sn-1-monoacylglycerol (1-acyl-sn-glycerol) equally well as substrates, and uses sn-3-monoacylglycerol (3-acyl-sn-glycerol) with lower efficiency. Probably not involved in absorption of dietary fat in the small intestine. The protein is 2-acylglycerol O-acyltransferase 1 of Homo sapiens (Human).